Here is a 1334-residue protein sequence, read N- to C-terminus: WASH complex subunit 2 (1334 aa).

The interval 1–219 is sufficient for interaction with WASHC3, WASHC4 and WASHC5; required for interaction with WASHC1; that stretch reads MNRTSPDSER…VGSDRGSIVD (219 aa). Residues Ser157, Ser159, Ser204, Ser205, and Ser209 each carry the phosphoserine modification. A compositionally biased stretch (low complexity) spans 201–213; that stretch reads GELSSEEGSVGSD. Positions 201–471 are disordered; it reads GELSSEEGSV…SKPSKTDKVK (271 aa). Composition is skewed to acidic residues over residues 219-232 and 249-274; these read DSED…SDED and SDEE…EDIE. A Phosphoserine modification is found at Ser284. Residues 289–324 are compositionally biased toward basic and acidic residues; it reads LAARIKGDISNQRKEGQTDGKPQKTVKEKKERRTPA. Thr322 bears the Phosphothreonine mark. Residues 347–594 form a sufficient for interaction with CCDC93 region; the sequence is SRGGLFSNGQ…QTSSLQPQSQ (248 aa). The segment at 348–1334 is interaction with VPS35; that stretch reads RGGLFSNGQG…DDPLNAFGSQ (987 aa). The short motif at 358–368 is the LFa 1 element; that stretch reads LFDDEDESDLF. Ser388 bears the Phosphoserine mark. 2 consecutive short sequence motifs (LFa) follow at residues 441–457 and 476–485; these read LFDD…NNFF and IFDDDEGDLF. A compositionally biased stretch (acidic residues) spans 442-454; it reads FDDDDNDNDEDDN. The segment at 492–650 is disordered; sequence LPAASVSQTH…DSGATQGQEA (159 aa). Over residues 513–530 the composition is skewed to polar residues; the sequence is LPSSKNLKLVSETKTQKG. Short sequence motifs (LFa) lie at residues 531-542 and 566-577; these read LFSDEEDSEDLF and LFGDEDEEDSLF. Ser533 and Ser538 each carry phosphoserine. Positions 541–561 are enriched in low complexity; sequence LFSSQSSSKPKSASLPSSQPP. 2 stretches are compositionally biased toward polar residues: residues 584-594 and 601-611; these read KQTSSLQPQSQ and EQPSKKTSALL. Phosphoserine occurs at positions 613 and 614. Residues 625-639 are compositionally biased toward basic and acidic residues; the sequence is SHTKLASDNKSKGEL. 2 short sequence motifs (LFa) span residues 658–670 and 686–698; these read LFED…VDLF and LFED…SSLF. Residues 691-837 are disordered; it reads AESGSSLFGL…SRPKSTGVFQ (147 aa). Ser723, Ser747, Ser752, Ser783, and Ser798 each carry phosphoserine. Over residues 800–811 the composition is skewed to acidic residues; that stretch reads FDEDEDKVEDES. The segment covering 818–830 has biased composition (basic and acidic residues); the sequence is DGREKGLKTDSRP. Short sequence motifs (LFa) lie at residues 835–843 and 852–858; these read VFQDEELLF and DPDVDLF. 2 disordered regions span residues 862–948 and 1014–1225; these read KKIR…PSSR and AQAD…SKTH. Ser870 and Ser873 each carry phosphoserine. An LFa 10 motif is present at residues 874–884; it reads LFGDDEDDDLF. Basic and acidic residues predominate over residues 894 to 906; sequence PEKKGTLKKDHPV. The segment covering 908–919 has biased composition (polar residues); that stretch reads LKNQDPLDSTQG. The interval 932–1334 is interaction with phospholipids; sequence QDSSGLTPFK…DDPLNAFGSQ (403 aa). Residues 1023-1041 show a composition bias toward basic residues; that stretch reads NKSRVKVRGKRRPQTRAAR. Residues 1024–1042 are required for interaction with F-actin-capping protein subunit alpha (CAPZA1 or CAPZA2 or CAPZA3); that stretch reads KSRVKVRGKRRPQTRAARR. Phosphoserine is present on residues Ser1049, Ser1067, Ser1084, and Ser1109. 3 consecutive short sequence motifs (LFa) follow at residues 1124-1131, 1164-1178, and 1194-1202; these read LFDSGDIF, AFPD…EDLF, and LLEDEEDLF. A phosphoserine mark is found at Ser1169, Ser1172, and Ser1173. A compositionally biased stretch (basic and acidic residues) spans 1203–1225; sequence ADPRGKKNERKPDSHQDSVSKTH. 3 short sequence motifs (LFa) span residues 1227-1233, 1255-1263, and 1283-1292; these read IFEDDIF, LFDDNIDIF, and MFDDDTDDIF. Positions 1294 to 1334 are disordered; it reads SGLQAKASKPKSQSAEAASEQRSEHKVASIFDDPLNAFGSQ. Residues 1297-1311 are compositionally biased toward low complexity; that stretch reads QAKASKPKSQSAEAA. The LFa 17 signature appears at 1323–1331; it reads IFDDPLNAF. At Ser1333 the chain carries Phosphoserine.

This sequence belongs to the FAM21 family. In terms of assembly, component of the WASH core complex also described as WASH regulatory complex (SHRC) composed of WASHC1, WASHC2, WASHC3, WASHC4 and WASHC5; in the complex interacts (via N-terminus) directly with WASHC1. The WASH core complex associates with the F-actin-capping protein dimer (formed by CAPZA1, CAPZA2 or CAPZA3 and CAPZB) in a transient or substoichiometric manner which was initially described as WASH complex. Interacts with VPS35; mediates the association with the retromer CSC complex. Interacts with FKBP15. Interacts with CCDC93, CCDC22, VPS35L; indicative for an association of the WASH core complex with the CCC and retriever complexes. Directly interacts with TBC1D23.

The protein resides in the early endosome membrane. The protein localises to the cell membrane. Functionally, acts as a component of the WASH core complex that functions as a nucleation-promoting factor (NPF) at the surface of endosomes, where it recruits and activates the Arp2/3 complex to induce actin polymerization, playing a key role in the fission of tubules that serve as transport intermediates during endosome sorting. Mediates the recruitment of the WASH core complex to endosome membranes via binding to phospholipids and VPS35 of the retromer CSC. Mediates the recruitment of the F-actin-capping protein dimer to the WASH core complex probably promoting localized F-actin polymerization needed for vesicle scission. Via its C-terminus binds various phospholipids, most strongly phosphatidylinositol 4-phosphate (PtdIns-(4)P), phosphatidylinositol 5-phosphate (PtdIns-(5)P) and phosphatidylinositol 3,5-bisphosphate (PtdIns-(3,5)P2). Involved in the endosome-to-plasma membrane trafficking and recycling of SNX27-retromer-dependent cargo proteins, such as GLUT1. Required for the association of DNAJC13, ENTR1, ANKRD50 with retromer CSC subunit VPS35. Required for the endosomal recruitment of CCC and retriever complexes subunits COMMD1 and CCDC93 as well as the retrievere complex subunit VPS35L. This chain is WASH complex subunit 2, found in Mus musculus (Mouse).